Here is a 339-residue protein sequence, read N- to C-terminus: 2-deoxy-scyllo-inosamine dehydrogenase (339 aa).

7 residues coordinate Zn(2+): Cys37, His59, Cys88, Cys91, Cys94, Cys102, and Glu143.

Belongs to the zinc-containing alcohol dehydrogenase family. DOIA dehydrogenase subfamily. It depends on Zn(2+) as a cofactor.

It catalyses the reaction 2-deoxy-scyllo-inosamine + NADP(+) = 3-amino-2,3-dideoxy-scyllo-inosose + NADPH + H(+). The enzyme catalyses 2-deoxy-scyllo-inosamine + NAD(+) = 3-amino-2,3-dideoxy-scyllo-inosose + NADH + H(+). It participates in metabolic intermediate biosynthesis; 2-deoxystreptamine biosynthesis; 2-deoxystreptamine from D-glucose 6-phosphate: step 3/4. The protein operates within antibiotic biosynthesis; tobramycin biosynthesis. Its function is as follows. Catalyzes the oxidation of 2-deoxy-scyllo-inosamine (DOIA) with NAD(+) or NADP(+), forming 3-amino-2,3-dideoxy-scyllo-inosose (amino-DOI). In Streptoalloteichus tenebrarius (strain ATCC 17920 / DSM 40477 / JCM 4838 / CBS 697.72 / NBRC 16177 / NCIMB 11028 / NRRL B-12390 / A12253. 1 / ISP 5477) (Streptomyces tenebrarius), this protein is 2-deoxy-scyllo-inosamine dehydrogenase (tobE).